The primary structure comprises 147 residues: Hemoglobin subunit beta (147 aa).

The Globin domain maps to 3 to 147 (EWTDDERAII…VVSALGRQYH (145 aa)). 2 residues coordinate heme b: His64 and His93.

It belongs to the globin family. In terms of assembly, heterotetramer of two alpha chains and two beta chains. In terms of tissue distribution, red blood cells.

Involved in oxygen transport from gills to the various peripheral tissues. In Merlangius merlangus (Whiting), this protein is Hemoglobin subunit beta (hbb).